A 389-amino-acid chain; its full sequence is Agamous-like MADS-box protein AGL65 (389 aa).

An MADS-box domain is found at 1-61 (MGRVKLKIKR…GRATAFHGEH (61 aa)). Coiled-coil stretches lie at residues 77–131 (QERT…LMEC) and 293–325 (GMEE…QQQD). The segment at 310–343 (NLQQQQQQQQQQQQQDPSMYDPMANNNGGCFQIP) is disordered. The span at 312 to 324 (QQQQQQQQQQQQQ) shows a compositional bias: low complexity.

As to quaternary structure, forms a heterodimer with AGL104. In terms of tissue distribution, expressed in pollen.

It localises to the nucleus. Functionally, probable transcription factor that forms a heterodimer with the MADS-box protein AGL104 and is involved in the regulation of pollen maturation at the late stages of pollen development and pollen tube growth. The sequence is that of Agamous-like MADS-box protein AGL65 from Arabidopsis thaliana (Mouse-ear cress).